Consider the following 112-residue polypeptide: Iron-sulfur cluster assembly protein CyaY (112 aa).

It belongs to the frataxin family.

Its function is as follows. Involved in iron-sulfur (Fe-S) cluster assembly. May act as a regulator of Fe-S biogenesis. This Janthinobacterium sp. (strain Marseille) (Minibacterium massiliensis) protein is Iron-sulfur cluster assembly protein CyaY.